The following is a 964-amino-acid chain: Probable outer membrane protein PmpE (964 aa).

An N-terminal signal peptide occupies residues 1 to 18; it reads MKKAFFFFLIGNSLSGLA. An Autotransporter domain is found at 683–964; that stretch reads LTPSGHPFWG…YLNGEIALRF (282 aa).

The protein belongs to the PMP outer membrane protein family.

The protein localises to the secreted. The protein resides in the cell wall. It is found in the cell outer membrane. This chain is Probable outer membrane protein PmpE (pmpE), found in Chlamydia trachomatis serovar D (strain ATCC VR-885 / DSM 19411 / UW-3/Cx).